Here is a 43-residue protein sequence, read N- to C-terminus: Protein PsbN (43 aa).

A helical membrane pass occupies residues 5–27 (TLVAISISRLLVSFTGYALYTAF).

The protein belongs to the PsbN family.

It localises to the plastid. Its subcellular location is the chloroplast thylakoid membrane. Its function is as follows. May play a role in photosystem I and II biogenesis. The sequence is that of Protein PsbN from Cycas taitungensis (Prince sago).